Consider the following 279-residue polypeptide: MIHFAKMHGLGNDFMVVDGVTQNVFFSPEQIKRLADRNFGVGFDQLLLVEPPYDPDLDFHYRIFNADGGEVEQCGNGARCFARFVRNKGLTNKHKIKVSTSNGKITLRLERDGNVTVNMGVPVLDPSKIPFNAKRVEKTYLLQTSSSHAMETFLCGAISMGNPHCVLEVEDIEHAEVERIGALLTQNERFPKGVNVGFMQVIDAGHIKLRVYERGAAETLACGTGACAAAAVGQLQGKLNKMVRVDLPGGTLTINWEGEGNPLWMTGPAEHVYDGQIPQ.

The substrate site is built by Asn12, Gln45, and Asn65. Residue Cys74 is the Proton donor of the active site. Residues 75-76 (GN), Asn162, Asn195, and 213-214 (ER) contribute to the substrate site. The active-site Proton acceptor is Cys222. 223–224 (GT) is a substrate binding site.

This sequence belongs to the diaminopimelate epimerase family. In terms of assembly, homodimer.

Its subcellular location is the cytoplasm. The enzyme catalyses (2S,6S)-2,6-diaminopimelate = meso-2,6-diaminopimelate. It participates in amino-acid biosynthesis; L-lysine biosynthesis via DAP pathway; DL-2,6-diaminopimelate from LL-2,6-diaminopimelate: step 1/1. Catalyzes the stereoinversion of LL-2,6-diaminopimelate (L,L-DAP) to meso-diaminopimelate (meso-DAP), a precursor of L-lysine and an essential component of the bacterial peptidoglycan. This Shewanella woodyi (strain ATCC 51908 / MS32) protein is Diaminopimelate epimerase.